The sequence spans 331 residues: tRNA-dihydrouridine(20/20a) synthase (331 aa).

FMN contacts are provided by residues Pro-18 to Leu-20 and Gln-70. The Proton donor role is filled by Cys-100. FMN-binding positions include Lys-139, His-172, Asn-212 to Gly-214, and Gly-234 to Arg-235.

The protein belongs to the Dus family. DusA subfamily. FMN serves as cofactor.

It catalyses the reaction 5,6-dihydrouridine(20) in tRNA + NADP(+) = uridine(20) in tRNA + NADPH + H(+). The catalysed reaction is 5,6-dihydrouridine(20) in tRNA + NAD(+) = uridine(20) in tRNA + NADH + H(+). The enzyme catalyses 5,6-dihydrouridine(20a) in tRNA + NADP(+) = uridine(20a) in tRNA + NADPH + H(+). It carries out the reaction 5,6-dihydrouridine(20a) in tRNA + NAD(+) = uridine(20a) in tRNA + NADH + H(+). In terms of biological role, catalyzes the synthesis of 5,6-dihydrouridine (D), a modified base found in the D-loop of most tRNAs, via the reduction of the C5-C6 double bond in target uridines. Specifically modifies U20 and U20a in tRNAs. In Escherichia coli O6:H1 (strain CFT073 / ATCC 700928 / UPEC), this protein is tRNA-dihydrouridine(20/20a) synthase.